Reading from the N-terminus, the 442-residue chain is Proline--tRNA ligase (442 aa).

The protein belongs to the class-II aminoacyl-tRNA synthetase family. ProS type 2 subfamily. Homodimer.

It localises to the cytoplasm. The catalysed reaction is tRNA(Pro) + L-proline + ATP = L-prolyl-tRNA(Pro) + AMP + diphosphate. Catalyzes the attachment of proline to tRNA(Pro) in a two-step reaction: proline is first activated by ATP to form Pro-AMP and then transferred to the acceptor end of tRNA(Pro). The protein is Proline--tRNA ligase of Rhizobium meliloti (strain 1021) (Ensifer meliloti).